The following is a 185-amino-acid chain: Capsid protein (185 aa).

The tract at residues Asn-136 to Cys-185 is disordered. Residues Val-149–Ser-178 show a composition bias toward basic residues. A phosphoserine; by host mark is found at Ser-157, Ser-164, and Ser-172. One copy of the 1; half-length repeat lies at Ser-157 to Pro-163. Positions Ser-157 to Gln-179 are 3 X 8 AA repeats of S-P-R-R-R-[PR]-S-Q. A Bipartite nuclear localization signal motif is present at residues Arg-160–Arg-177. Repeat copies occupy residues Ser-164 to Gln-171 and Ser-172 to Gln-179. Positions Gln-179 to Cys-185 are RNA binding.

The protein belongs to the orthohepadnavirus core antigen family. In terms of assembly, homodimerizes, then multimerizes. Interacts with cytosol exposed regions of viral L glycoprotein present in the reticulum-to-Golgi compartment. Interacts with human FLNB. Phosphorylated form interacts with host importin alpha; this interaction depends on the exposure of the NLS, which itself depends upon genome maturation and/or phosphorylation of the capsid protein. Interacts with host NUP153. In terms of processing, phosphorylated by host SRPK1, SRPK2, and maybe protein kinase C or GAPDH. Phosphorylation is critical for pregenomic RNA packaging. Protein kinase C phosphorylation is stimulated by HBx protein and may play a role in transport of the viral genome to the nucleus at the late step during the viral replication cycle.

It is found in the virion. It localises to the host cytoplasm. Functionally, self assembles to form an icosahedral capsid. Most capsids appear to be large particles with an icosahedral symmetry of T=4 and consist of 240 copies of capsid protein, though a fraction forms smaller T=3 particles consisting of 180 capsid proteins. Entering capsids are transported along microtubules to the nucleus. Phosphorylation of the capsid is thought to induce exposure of nuclear localization signal in the C-terminal portion of the capsid protein that allows binding to the nuclear pore complex via the importin (karyopherin-) alpha and beta. Capsids are imported in intact form through the nuclear pore into the nuclear basket, where it probably binds NUP153. Only capsids that contain the mature viral genome can release the viral DNA and capsid protein into the nucleoplasm. Immature capsids get stuck in the basket. Capsids encapsulate the pre-genomic RNA and the P protein. Pre-genomic RNA is reverse-transcribed into DNA while the capsid is still in the cytoplasm. The capsid can then either be directed to the nucleus, providing more genomes for transcription, or bud through the endoplasmic reticulum to provide new virions. The sequence is that of Capsid protein from Homo sapiens (Human).